The sequence spans 311 residues: MKVAVLGAAGGIGQALALLLKTQLPAGSKLSLYDIAPVTPGVAVDLSHIPTAVEIKGFAGEDPTPALVGADVVLISAGVARKPGMDRSDLFNINAGIVRNLIEKVAATCPKALVGIITNPVNTTVAIAAEVMKKAGVYDKNRLFGVTTLDVIRSETFIAELKGLNVADVKINVIGGHSGVTILPLLSQVEGVTFSDEEVASLTKRIQNAGTEVVEAKAGGGSATLSMGQAACRFGMSLVRGLQGEANVVECAYVDGGSEHAEFFAQPVLLGKNGIEKVLPYGEVSAFEANARDSMLDTLKGDIKLGVDFVK.

NAD(+) is bound by residues 7–13 (GAAGGIG) and D34. Residues R81 and R87 each coordinate substrate. NAD(+) contacts are provided by residues N94 and 117–119 (ITN). Positions 119 and 153 each coordinate substrate. Catalysis depends on H177, which acts as the Proton acceptor. M227 contributes to the NAD(+) binding site.

This sequence belongs to the LDH/MDH superfamily. MDH type 1 family. In terms of assembly, homodimer.

The enzyme catalyses (S)-malate + NAD(+) = oxaloacetate + NADH + H(+). Its function is as follows. Catalyzes the reversible oxidation of malate to oxaloacetate. This is Malate dehydrogenase from Shewanella putrefaciens (strain CN-32 / ATCC BAA-453).